The following is an 872-amino-acid chain: Alanine--tRNA ligase (872 aa).

Positions 567, 571, 669, and 673 each coordinate Zn(2+).

The protein belongs to the class-II aminoacyl-tRNA synthetase family. Zn(2+) serves as cofactor.

It localises to the cytoplasm. It catalyses the reaction tRNA(Ala) + L-alanine + ATP = L-alanyl-tRNA(Ala) + AMP + diphosphate. In terms of biological role, catalyzes the attachment of alanine to tRNA(Ala) in a two-step reaction: alanine is first activated by ATP to form Ala-AMP and then transferred to the acceptor end of tRNA(Ala). Also edits incorrectly charged Ser-tRNA(Ala) and Gly-tRNA(Ala) via its editing domain. This Streptococcus pneumoniae serotype 2 (strain D39 / NCTC 7466) protein is Alanine--tRNA ligase.